The sequence spans 228 residues: Probable septum site-determining protein MinC (228 aa).

Belongs to the MinC family. As to quaternary structure, interacts with MinD and FtsZ.

Its function is as follows. Cell division inhibitor that blocks the formation of polar Z ring septums. Rapidly oscillates between the poles of the cell to destabilize FtsZ filaments that have formed before they mature into polar Z rings. Prevents FtsZ polymerization. The sequence is that of Probable septum site-determining protein MinC from Bacillus cereus (strain G9842).